The chain runs to 317 residues: Signal recognition particle receptor FtsY (317 aa).

GTP contacts are provided by residues 117-124 (GVNGVGKT), 199-203 (DTAGR), and 263-266 (TKLD).

It belongs to the GTP-binding SRP family. FtsY subfamily. In terms of assembly, part of the signal recognition particle protein translocation system, which is composed of SRP and FtsY.

Its subcellular location is the cell membrane. It localises to the cytoplasm. The catalysed reaction is GTP + H2O = GDP + phosphate + H(+). In terms of biological role, involved in targeting and insertion of nascent membrane proteins into the cytoplasmic membrane. Acts as a receptor for the complex formed by the signal recognition particle (SRP) and the ribosome-nascent chain (RNC). In Deinococcus radiodurans (strain ATCC 13939 / DSM 20539 / JCM 16871 / CCUG 27074 / LMG 4051 / NBRC 15346 / NCIMB 9279 / VKM B-1422 / R1), this protein is Signal recognition particle receptor FtsY.